Consider the following 161-residue polypeptide: Transcriptional repressor NrdR (161 aa).

The segment covering 1 to 11 (MRCPSCNSLDT) has biased composition (polar residues). The interval 1-20 (MRCPSCNSLDTQVKDSRPTE) is disordered. The segment at 3–34 (CPSCNSLDTQVKDSRPTEDSSVIRRRRVCVTC) is a zinc-finger region. The 91-residue stretch at 49 to 139 (LTVIKRNGRR…VYRNFREAKD (91 aa)) folds into the ATP-cone domain.

It belongs to the NrdR family. The cofactor is Zn(2+).

In terms of biological role, negatively regulates transcription of bacterial ribonucleotide reductase nrd genes and operons by binding to NrdR-boxes. The polypeptide is Transcriptional repressor NrdR (Bradyrhizobium sp. (strain ORS 278)).